The sequence spans 61 residues: [Val1,Thr6]-bradykinyl-Gln,Ser (61 aa).

Residues 1 to 22 form the signal peptide; the sequence is MSILKKSLFLVLFLGLVSFSIC. Positions 23–50 are excised as a propeptide; it reads EEEKREAEEEENEDEIEEQSEEKKRFEP. Residues 25–61 form a disordered region; it reads EKREAEEEENEDEIEEQSEEKKRFEPVPPGFTPFRQS. The span at 30-42 shows a compositional bias: acidic residues; it reads EEEENEDEIEEQS. The residue at position 52 (Pro52) is a 4-hydroxyproline; in form [Val1,Hyp2,Thr6]-Bradykinyl-Gln,Ser and [Val1,Hyp2,Thr6]-Bradykinin.

This sequence belongs to the frog skin active peptide (FSAP) family. Bradykinin-related peptide subfamily. As to expression, expressed by the skin glands.

The protein resides in the secreted. Its function is as follows. Induces contraction of rat ileum smooth muscle (EC(50)=2.73 uM) but has no activity towards smooth muscle from tail artery, urinary bladder or uterus up to concentrations of 100 uM. Binds to both bradykinin receptor B1 (BDKRB1) and B2 (BDKRB2); the effect via BDKRB1 is stronger. In terms of biological role, [Val1,Hyp2,Thr6]-bradykinin-Gln,Ser: Induces contraction of rat ileum smooth muscle (EC(50)=710 nM) but has no activity towards smooth muscle from tail artery, urinary bladder or uterus up to concentrations of 100 uM. Binds to both bradykinin receptor B1 (BDKRB1) and B2 (BDKRB2); the effect via BDKRB1 is stronger. Induces contraction of guinea pig ileum smooth muscle. The chain is [Val1,Thr6]-bradykinyl-Gln,Ser from Pithecopus hypochondrialis (Orange-legged leaf frog).